The chain runs to 268 residues: Indole-3-glycerol phosphate synthase (268 aa).

This sequence belongs to the TrpC family.

The enzyme catalyses 1-(2-carboxyphenylamino)-1-deoxy-D-ribulose 5-phosphate + H(+) = (1S,2R)-1-C-(indol-3-yl)glycerol 3-phosphate + CO2 + H2O. It participates in amino-acid biosynthesis; L-tryptophan biosynthesis; L-tryptophan from chorismate: step 4/5. This is Indole-3-glycerol phosphate synthase from Acinetobacter baumannii (strain AB0057).